Here is a 603-residue protein sequence, read N- to C-terminus: Elongation factor 4 (603 aa).

A tr-type G domain is found at 7–189 (SRIRNFSIIA…SIVHLVPPPE (183 aa)). GTP is bound by residues 19 to 24 (DHGKST) and 136 to 139 (NKID).

This sequence belongs to the TRAFAC class translation factor GTPase superfamily. Classic translation factor GTPase family. LepA subfamily.

The protein resides in the cell inner membrane. The enzyme catalyses GTP + H2O = GDP + phosphate + H(+). In terms of biological role, required for accurate and efficient protein synthesis under certain stress conditions. May act as a fidelity factor of the translation reaction, by catalyzing a one-codon backward translocation of tRNAs on improperly translocated ribosomes. Back-translocation proceeds from a post-translocation (POST) complex to a pre-translocation (PRE) complex, thus giving elongation factor G a second chance to translocate the tRNAs correctly. Binds to ribosomes in a GTP-dependent manner. The sequence is that of Elongation factor 4 from Acaryochloris marina (strain MBIC 11017).